The chain runs to 107 residues: Prepilin peptidase-dependent protein C (107 aa).

A propeptide spanning residues 1-10 (MSASLKNQQG) is cleaved from the precursor. Phenylalanine 11 carries the post-translational modification N-methylphenylalanine. The helical transmembrane segment at 11–30 (FSLPEVMLAMVLMVMIVTAL) threads the bilayer.

The protein resides in the membrane. Functionally, not yet known. The polypeptide is Prepilin peptidase-dependent protein C (ppdC) (Escherichia coli (strain K12)).